Reading from the N-terminus, the 90-residue chain is UPF0298 protein SSU05_1549 (90 aa).

It belongs to the UPF0298 family.

The protein localises to the cytoplasm. This Streptococcus suis (strain 05ZYH33) protein is UPF0298 protein SSU05_1549.